The following is a 491-amino-acid chain: MDTKGCTTTNSPSTPCQNCSRITNVSTISSNNGCHPGGLTVNNCQPAGHVLRIPWDQGCQPTPRFCRKPIYLMNNFNARFSLDDCSWYGEGINSNEKETMQILNERLANYLQKVRMLERENAELESKIQEESNKELPVLCPDYLSYYTTIEELQQKILCTKAENSRLVSQIDNTKLTADDLRAKYEAEVSLRQLVESDANGLKQILNVLTLGKADLEAQVQSLKEELLCLKNNHKEEINSLQCQLGERLDIEVTAAPSADLNQVLQEMRCQYEPIMETNRKDVEQWFNTQIEELNQQVVTSSQQQQCCQKEIIELRRSVNTLEVELQAQHRMRDSQECILTETEARYTALLTQIQSLIDNLEAQLAEIRCALERQNQEYEILLDVKSRLECEITTYRSLLESSDGKRPCYPRATKCEPSPWTSCKSGAIESTAPACTSSSPCSLKEHCSACGPLSRILVKICTITKEIKDGKVISSYEHVQPCFIIRPAKV.

The head stretch occupies residues 1–96; it reads MDTKGCTTTN…WYGEGINSNE (96 aa). One can recognise an IF rod domain in the interval 96–407; sequence EKETMQILNE…SLLESSDGKR (312 aa). The coil 1A stretch occupies residues 97 to 131; it reads KETMQILNERLANYLQKVRMLERENAELESKIQEE. The linker 1 stretch occupies residues 132 to 142; that stretch reads SNKELPVLCPD. Residues 143–243 form a coil 1B region; the sequence is YLSYYTTIEE…HKEEINSLQC (101 aa). Positions 244–259 are linker 12; the sequence is QLGERLDIEVTAAPSA. The tract at residues 260–403 is coil 2; that stretch reads DLNQVLQEMR…TTYRSLLESS (144 aa). The tail stretch occupies residues 404 to 491; sequence DGKRPCYPRA…PCFIIRPAKV (88 aa).

It belongs to the intermediate filament family. As to quaternary structure, heterotetramer of two type I and two type II keratins. In terms of tissue distribution, expressed in skin and scalp. In the hair follicle, it is present in the upper hair cuticle and the upper cortex. Also present in the in the upper portion of beard hairs (at protein level).

Its function is as follows. May play a role in late hair differentiation. This is Keratin, type I cytoskeletal 39 (KRT39) from Homo sapiens (Human).